The chain runs to 104 residues: Large ribosomal subunit protein uL24 (104 aa).

It belongs to the universal ribosomal protein uL24 family. In terms of assembly, part of the 50S ribosomal subunit.

Functionally, one of two assembly initiator proteins, it binds directly to the 5'-end of the 23S rRNA, where it nucleates assembly of the 50S subunit. One of the proteins that surrounds the polypeptide exit tunnel on the outside of the subunit. The sequence is that of Large ribosomal subunit protein uL24 from Clostridium botulinum (strain Alaska E43 / Type E3).